The chain runs to 448 residues: Glutamyl-tRNA reductase (448 aa).

Substrate-binding positions include 49-52 (TCNR), serine 109, 114-116 (ETQ), and glutamine 120. Cysteine 50 serves as the catalytic Nucleophile. 189-194 (GAGEMS) serves as a coordination point for NADP(+).

It belongs to the glutamyl-tRNA reductase family. Homodimer.

It carries out the reaction (S)-4-amino-5-oxopentanoate + tRNA(Glu) + NADP(+) = L-glutamyl-tRNA(Glu) + NADPH + H(+). It participates in porphyrin-containing compound metabolism; protoporphyrin-IX biosynthesis; 5-aminolevulinate from L-glutamyl-tRNA(Glu): step 1/2. In terms of biological role, catalyzes the NADPH-dependent reduction of glutamyl-tRNA(Glu) to glutamate 1-semialdehyde (GSA). This is Glutamyl-tRNA reductase from Staphylococcus aureus (strain NCTC 8325 / PS 47).